Reading from the N-terminus, the 28-residue chain is trp operon leader peptide (28 aa).

Functionally, this protein is involved in control of the biosynthesis of tryptophan. The sequence is that of trp operon leader peptide (trpL) from Serratia marcescens.